We begin with the raw amino-acid sequence, 496 residues long: UDP-N-acetylmuramate--L-alanine ligase (496 aa).

Position 122 to 128 (122 to 128 (GTHGKTT)) interacts with ATP.

The protein belongs to the MurCDEF family.

It is found in the cytoplasm. It catalyses the reaction UDP-N-acetyl-alpha-D-muramate + L-alanine + ATP = UDP-N-acetyl-alpha-D-muramoyl-L-alanine + ADP + phosphate + H(+). It functions in the pathway cell wall biogenesis; peptidoglycan biosynthesis. Its function is as follows. Cell wall formation. The chain is UDP-N-acetylmuramate--L-alanine ligase from Mycolicibacterium paratuberculosis (strain ATCC BAA-968 / K-10) (Mycobacterium paratuberculosis).